The following is a 78-amino-acid chain: Kassorin-S (78 aa).

Residues 1–22 (MLTLKKSMLLLFFLGMVSLSLA) form the signal peptide. A propeptide spanning residues 23–64 (NSKRADEEGEDKRADEEGEDKRADEEGEDKRADEEGEEKRKR) is cleaved from the precursor. The interval 24–60 (SKRADEEGEDKRADEEGEDKRADEEGEDKRADEEGEE) is disordered. The span at 25–60 (KRADEEGEDKRADEEGEDKRADEEGEDKRADEEGEE) shows a compositional bias: basic and acidic residues. At Leu77 the chain carries Leucine amide.

This sequence belongs to the frog skin active peptide (FSAP) family. Brevinin subfamily. As to expression, expressed by the skin glands.

The protein resides in the secreted. In terms of biological role, antimicrobial peptide. Active against the Gram-positive bacterium S.aureus (MIC=30 uM) and the yeast C.albicans (MIC=100 uM). Not effective against the Gram-negative bacterium E.coli at concentrations up to 250 uM. Lacks ability to induce contraction of smooth muscle in isolated guinea pig urinary bladder. Elicits histamine release from rat peritoneal mast cells. This Kassina senegalensis (Senegal running frog) protein is Kassorin-S.